Consider the following 339-residue polypeptide: Nitrilase (339 aa).

The region spanning Tyr7–Leu277 is the CN hydrolase domain. Glu47 (proton acceptor) is an active-site residue. The active-site Proton donor is Lys128. Cys162 acts as the Nucleophile in catalysis.

It belongs to the carbon-nitrogen hydrolase superfamily. Nitrilase family.

It carries out the reaction a nitrile + 2 H2O = a carboxylate + NH4(+). In Bacillus sp. (strain OxB-1), this protein is Nitrilase (nit).